The following is a 716-amino-acid chain: Polyribonucleotide nucleotidyltransferase (716 aa).

Residues aspartate 495 and aspartate 501 each coordinate Mg(2+). One can recognise a KH domain in the interval 562-621; it reads PRLFRIQINPEQIGLVIGPGGKTIRSITEQTGAKIDIEDTGAVTISAVDADSALRAKSII. In terms of domain architecture, S1 motif spans 631–699; that stretch reads GDVYIGKVTR…QKGRVNLTRK (69 aa).

It belongs to the polyribonucleotide nucleotidyltransferase family. It depends on Mg(2+) as a cofactor.

It is found in the cytoplasm. The catalysed reaction is RNA(n+1) + phosphate = RNA(n) + a ribonucleoside 5'-diphosphate. In terms of biological role, involved in mRNA degradation. Catalyzes the phosphorolysis of single-stranded polyribonucleotides processively in the 3'- to 5'-direction. The chain is Polyribonucleotide nucleotidyltransferase from Synechococcus sp. (strain ATCC 27144 / PCC 6301 / SAUG 1402/1) (Anacystis nidulans).